A 391-amino-acid polypeptide reads, in one-letter code: Putative 12-oxophytodienoate reductase 6 (391 aa).

FMN is bound by residues 42–44, Ala75, and Gln117; that span reads PMT. 189–192 is a binding site for substrate; sequence HGAN. The active-site Proton donor is the Tyr194. An FMN-binding site is contributed by Arg241. Arg282 contributes to the substrate binding site. Residues Gly312 and 333-334 each bind FMN; that span reads GR. Residues 372–391 form a disordered region; that stretch reads YPFLDEHHHDDDDDSNAPSA. The segment covering 382–391 has biased composition (acidic residues); that stretch reads DDDDSNAPSA.

It belongs to the NADH:flavin oxidoreductase/NADH oxidase family. FMN serves as cofactor.

Putative oxophytodienoate reductase that may be involved in the biosynthesis or metabolism of oxylipin signaling molecules. The sequence is that of Putative 12-oxophytodienoate reductase 6 (OPR6) from Oryza sativa subsp. japonica (Rice).